Here is a 276-residue protein sequence, read N- to C-terminus: Protease HtpX homolog (276 aa).

The chain crosses the membrane as a helical span at residues Ile14–Phe34. His130 is a Zn(2+) binding site. Glu131 is a catalytic residue. His134 provides a ligand contact to Zn(2+). 2 consecutive transmembrane segments (helical) span residues Val145–Gly165 and Leu171–Ile191. Glu196 contacts Zn(2+).

The protein belongs to the peptidase M48B family. The cofactor is Zn(2+).

It localises to the cell inner membrane. The polypeptide is Protease HtpX homolog (Salinibacter ruber (strain DSM 13855 / M31)).